The following is a 542-amino-acid chain: CTP synthase (542 aa).

Residues 1–265 (MTRYVFITGG…DREVLGHFGL (265 aa)) are amidoligase domain. Residue Ser13 participates in CTP binding. Ser13 lines the UTP pocket. Residues 14–19 (SLGKGL) and Asp71 contribute to the ATP site. Mg(2+) is bound by residues Asp71 and Glu139. CTP contacts are provided by residues 146-148 (DIE), 186-191 (KTKPTQ), and Lys222. UTP-binding positions include 186–191 (KTKPTQ) and Lys222. One can recognise a Glutamine amidotransferase type-1 domain in the interval 291–541 (SIAIVGKYTG…VGAAIEQSRL (251 aa)). L-glutamine is bound at residue Gly353. Residue Cys380 is the Nucleophile; for glutamine hydrolysis of the active site. Residues 381–384 (FGMQ), Glu404, and Arg469 each bind L-glutamine. Residues His514 and Glu516 contribute to the active site.

Belongs to the CTP synthase family. In terms of assembly, homotetramer.

The enzyme catalyses UTP + L-glutamine + ATP + H2O = CTP + L-glutamate + ADP + phosphate + 2 H(+). It carries out the reaction L-glutamine + H2O = L-glutamate + NH4(+). The catalysed reaction is UTP + NH4(+) + ATP = CTP + ADP + phosphate + 2 H(+). It participates in pyrimidine metabolism; CTP biosynthesis via de novo pathway; CTP from UDP: step 2/2. With respect to regulation, allosterically activated by GTP, when glutamine is the substrate; GTP has no effect on the reaction when ammonia is the substrate. The allosteric effector GTP functions by stabilizing the protein conformation that binds the tetrahedral intermediate(s) formed during glutamine hydrolysis. Inhibited by the product CTP, via allosteric rather than competitive inhibition. In terms of biological role, catalyzes the ATP-dependent amination of UTP to CTP with either L-glutamine or ammonia as the source of nitrogen. Regulates intracellular CTP levels through interactions with the four ribonucleotide triphosphates. The polypeptide is CTP synthase (Methylobacterium radiotolerans (strain ATCC 27329 / DSM 1819 / JCM 2831 / NBRC 15690 / NCIMB 10815 / 0-1)).